The following is a 414-amino-acid chain: Serine--tRNA ligase (414 aa).

230-232 (TSE) serves as a coordination point for L-serine. 261-263 (RQE) is an ATP binding site. Glutamate 284 lines the L-serine pocket. 348–351 (EISS) lines the ATP pocket. Serine 382 lines the L-serine pocket.

The protein belongs to the class-II aminoacyl-tRNA synthetase family. Type-1 seryl-tRNA synthetase subfamily. In terms of assembly, homodimer. The tRNA molecule binds across the dimer.

It is found in the cytoplasm. It carries out the reaction tRNA(Ser) + L-serine + ATP = L-seryl-tRNA(Ser) + AMP + diphosphate + H(+). It catalyses the reaction tRNA(Sec) + L-serine + ATP = L-seryl-tRNA(Sec) + AMP + diphosphate + H(+). The protein operates within aminoacyl-tRNA biosynthesis; selenocysteinyl-tRNA(Sec) biosynthesis; L-seryl-tRNA(Sec) from L-serine and tRNA(Sec): step 1/1. Functionally, catalyzes the attachment of serine to tRNA(Ser). Is also able to aminoacylate tRNA(Sec) with serine, to form the misacylated tRNA L-seryl-tRNA(Sec), which will be further converted into selenocysteinyl-tRNA(Sec). The polypeptide is Serine--tRNA ligase (Campylobacter fetus subsp. fetus (strain 82-40)).